The sequence spans 225 residues: Orotate phosphoribosyltransferase (225 aa).

K32 is a binding site for 5-phospho-alpha-D-ribose 1-diphosphate. Position 40-41 (40-41 (FF)) interacts with orotate. 5-phospho-alpha-D-ribose 1-diphosphate is bound by residues 78–79 (YK), R104, K105, K108, H110, and 129–137 (DDVISAGTS). S133 and R161 together coordinate orotate.

Belongs to the purine/pyrimidine phosphoribosyltransferase family. PyrE subfamily. In terms of assembly, homodimer. It depends on Mg(2+) as a cofactor.

The catalysed reaction is orotidine 5'-phosphate + diphosphate = orotate + 5-phospho-alpha-D-ribose 1-diphosphate. It participates in pyrimidine metabolism; UMP biosynthesis via de novo pathway; UMP from orotate: step 1/2. Functionally, catalyzes the transfer of a ribosyl phosphate group from 5-phosphoribose 1-diphosphate to orotate, leading to the formation of orotidine monophosphate (OMP). In Cupriavidus metallidurans (strain ATCC 43123 / DSM 2839 / NBRC 102507 / CH34) (Ralstonia metallidurans), this protein is Orotate phosphoribosyltransferase.